The chain runs to 443 residues: Threonine/serine transporter TdcC (443 aa).

The next 11 membrane-spanning stretches (helical) occupy residues T22–I42, A44–F64, G97–V117, F140–M160, V163–I183, I207–I227, M261–A281, F311–F331, I366–L386, I389–I409, and D423–F443.

It belongs to the amino acid/polyamine transporter 2 family. SdaC/TdcC subfamily.

It localises to the cell inner membrane. The enzyme catalyses L-threonine(in) + H(+)(in) = L-threonine(out) + H(+)(out). It carries out the reaction L-serine(in) + H(+)(in) = L-serine(out) + H(+)(out). In terms of biological role, involved in the import of threonine and serine into the cell, with the concomitant import of a proton (symport system). This chain is Threonine/serine transporter TdcC, found in Shigella sonnei (strain Ss046).